The primary structure comprises 815 residues: Calpain-3 (815 aa).

A disordered region spans residues 7-36; that stretch reads ASVAPRTAAEPRSPGPVPHPAQSKATEAGG. A Calpain catalytic domain is found at 74–417; it reads LYVDPEFPPD…FTKLEICNLT (344 aa). Residues cysteine 129, histidine 334, and asparagine 358 contribute to the active site. The tract at residues 418–586 is domain III; it reads ADALQSDKLQ…KRNLSEEVEN (169 aa). The interval 587-649 is linker; it reads TISVDRPVPI…QESEEQQQFR (63 aa). The segment at 605-646 is disordered; it reads SNKELGVDQESEEGKGKTSPDKQEQSPQPQPGSSDQESEEQQ. A compositionally biased stretch (basic and acidic residues) spans 616–628; that stretch reads EEGKGKTSPDKQE. Over residues 629–639 the composition is skewed to low complexity; sequence QSPQPQPGSSD. EF-hand domains follow at residues 643–677, 686–719, 716–751, and 781–815; these read EEQQ…VVNK, FTLE…NKIK, NKIK…AGFH, and VRLE…TMYA. Residues 650-815 form a domain IV region; that stretch reads NIFKQIAGDD…LEWLQLTMYA (166 aa). Positions 656, 659, 661, 666, 699, 701, 703, 705, 710, 729, 731, 733, 735, 740, 794, 796, 798, and 800 each coordinate Ca(2+).

It belongs to the peptidase C2 family. Homodimer; via EF-hand domain 4. Interacts with TTN/titin. Interacts with CMYA5; this interaction, which results in CMYA5 proteolysis, may protect CAPN3 from autolysis. Interacts with SIMC1. Interacts with UTP25; the interaction is required for CAPN3 translocation to the nucleolus.

The protein localises to the cytoplasm. Its subcellular location is the nucleus. It is found in the nucleolus. It carries out the reaction Broad endopeptidase activity.. Its activity is regulated as follows. Activated by micromolar concentrations of calcium and inhibited by calpastatin. Calcium-regulated non-lysosomal thiol-protease. Proteolytically cleaves CTBP1. Mediates, with UTP25, the proteasome-independent degradation of p53/TP53. In Macaca fascicularis (Crab-eating macaque), this protein is Calpain-3 (CAPN3).